We begin with the raw amino-acid sequence, 374 residues long: tRNA-specific 2-thiouridylase MnmA (374 aa).

ATP-binding positions include 13 to 20 (GMSGGVDS) and Met-39. Residues 99 to 101 (NPD) form an interaction with target base in tRNA region. The Nucleophile role is filled by Cys-104. The cysteines at positions 104 and 201 are disulfide-linked. ATP is bound at residue Gly-128. The interval 151–153 (KDQ) is interaction with tRNA. Residue Cys-201 is the Cysteine persulfide intermediate of the active site. Residues 313–314 (RY) form an interaction with tRNA region.

The protein belongs to the MnmA/TRMU family.

The protein localises to the cytoplasm. The enzyme catalyses S-sulfanyl-L-cysteinyl-[protein] + uridine(34) in tRNA + AH2 + ATP = 2-thiouridine(34) in tRNA + L-cysteinyl-[protein] + A + AMP + diphosphate + H(+). Its function is as follows. Catalyzes the 2-thiolation of uridine at the wobble position (U34) of tRNA, leading to the formation of s(2)U34. The sequence is that of tRNA-specific 2-thiouridylase MnmA from Streptococcus equi subsp. zooepidemicus (strain H70).